The chain runs to 534 residues: ATP synthase subunit alpha 2 (534 aa).

Residue 175–182 (GDRQTGKT) participates in ATP binding. The disordered stretch occupies residues 506-534 (FQPAPEPETAPKTKTDIKPKPKAAGGESS). The span at 514–524 (TAPKTKTDIKP) shows a compositional bias: basic and acidic residues.

The protein belongs to the ATPase alpha/beta chains family. In terms of assembly, F-type ATPases have 2 components, CF(1) - the catalytic core - and CF(0) - the membrane proton channel. CF(1) has five subunits: alpha(3), beta(3), gamma(1), delta(1), epsilon(1). CF(0) has three main subunits: a(1), b(2) and c(9-12). The alpha and beta chains form an alternating ring which encloses part of the gamma chain. CF(1) is attached to CF(0) by a central stalk formed by the gamma and epsilon chains, while a peripheral stalk is formed by the delta and b chains.

It is found in the cell inner membrane. The enzyme catalyses ATP + H2O + 4 H(+)(in) = ADP + phosphate + 5 H(+)(out). In terms of biological role, produces ATP from ADP in the presence of a proton gradient across the membrane. The alpha chain is a regulatory subunit. The chain is ATP synthase subunit alpha 2 from Albidiferax ferrireducens (strain ATCC BAA-621 / DSM 15236 / T118) (Rhodoferax ferrireducens).